The primary structure comprises 172 residues: uncharacterized protein (172 aa).

This sequence belongs to the baculoviridae 19 kDa protein family.

This is an uncharacterized protein from Orgyia pseudotsugata multicapsid polyhedrosis virus (OpMNPV).